Reading from the N-terminus, the 575-residue chain is Aspartate--tRNA ligase (575 aa).

Position 169 (glutamate 169) interacts with L-aspartate. Residues 193–196 (QLFK) form an aspartate region. Arginine 215 contacts L-aspartate. ATP-binding positions include 215–217 (RDE) and glutamine 224. Histidine 438 contacts L-aspartate. Glutamate 472 is an ATP binding site. Residue arginine 479 coordinates L-aspartate. Residue 524-527 (GLDR) coordinates ATP.

Belongs to the class-II aminoacyl-tRNA synthetase family. Type 1 subfamily. In terms of assembly, homodimer.

It is found in the cytoplasm. The enzyme catalyses tRNA(Asp) + L-aspartate + ATP = L-aspartyl-tRNA(Asp) + AMP + diphosphate. In terms of biological role, catalyzes the attachment of L-aspartate to tRNA(Asp) in a two-step reaction: L-aspartate is first activated by ATP to form Asp-AMP and then transferred to the acceptor end of tRNA(Asp). The sequence is that of Aspartate--tRNA ligase from Mycoplasma capricolum subsp. capricolum (strain California kid / ATCC 27343 / NCTC 10154).